We begin with the raw amino-acid sequence, 375 residues long: N-acetylneuraminate epimerase (375 aa).

A signal peptide spans 1–22 (MKLTKTALCTALFATFTFSANA). Kelch repeat units lie at residues 43–87 (TVYV…AAVD), 89–140 (KLYV…ASHG), 142–176 (KVYI…EIVA), 177–222 (AYFD…TIQG), 225–273 (LVVV…LAGA), 295–344 (KQFK…SYNN), and 346–375 (VLLI…LTVE). Glu231 serves as the catalytic Proton acceptor.

It belongs to the NanM family. As to quaternary structure, homodimer.

It localises to the periplasm. The enzyme catalyses N-acetyl-alpha-neuraminate = N-acetyl-beta-neuraminate. Its function is as follows. Converts alpha-N-acetylneuranimic acid (Neu5Ac) to the beta-anomer, accelerating the equilibrium between the alpha- and beta-anomers. Probably facilitates sialidase-negative bacteria to compete successfully for limited amounts of extracellular Neu5Ac, which is likely taken up in the beta-anomer. In addition, the rapid removal of sialic acid from solution might be advantageous to the bacterium to damp down host responses. The chain is N-acetylneuraminate epimerase from Haemophilus influenzae (strain 86-028NP).